The following is a 67-amino-acid chain: Large ribosomal subunit protein uL29 (67 aa).

This sequence belongs to the universal ribosomal protein uL29 family.

The protein is Large ribosomal subunit protein uL29 of Desulfitobacterium hafniense (strain Y51).